A 376-amino-acid polypeptide reads, in one-letter code: Probable dual-specificity RNA methyltransferase RlmN (376 aa).

The Proton acceptor role is filled by Glu96. One can recognise a Radical SAM core domain in the interval 102-346; it reads YPDRSTVCVS…CTVRVERGVE (245 aa). Cys109 and Cys351 are disulfide-bonded. Residues Cys116, Cys120, and Cys123 each coordinate [4Fe-4S] cluster. S-adenosyl-L-methionine-binding positions include 171 to 172, Ser203, 226 to 228, and Asn308; these read GE and SLH. Cys351 acts as the S-methylcysteine intermediate in catalysis.

Belongs to the radical SAM superfamily. RlmN family. Requires [4Fe-4S] cluster as cofactor.

Its subcellular location is the cytoplasm. It catalyses the reaction adenosine(2503) in 23S rRNA + 2 reduced [2Fe-2S]-[ferredoxin] + 2 S-adenosyl-L-methionine = 2-methyladenosine(2503) in 23S rRNA + 5'-deoxyadenosine + L-methionine + 2 oxidized [2Fe-2S]-[ferredoxin] + S-adenosyl-L-homocysteine. The enzyme catalyses adenosine(37) in tRNA + 2 reduced [2Fe-2S]-[ferredoxin] + 2 S-adenosyl-L-methionine = 2-methyladenosine(37) in tRNA + 5'-deoxyadenosine + L-methionine + 2 oxidized [2Fe-2S]-[ferredoxin] + S-adenosyl-L-homocysteine. Its function is as follows. Specifically methylates position 2 of adenine 2503 in 23S rRNA and position 2 of adenine 37 in tRNAs. The sequence is that of Probable dual-specificity RNA methyltransferase RlmN from Chloroflexus aurantiacus (strain ATCC 29366 / DSM 635 / J-10-fl).